Here is a 7079-residue protein sequence, read N- to C-terminus: MESLALGVSEKTHVQLSLPVLQVRDVLVRGFGDSVEEALAEAREHLKNGTCGLVELEKGVLPQLEQPYVFIKRSDAQGTNHGYKVVELVAELDGIQYGRSGTTLGVLVPHVGETPVAYRNVLLRKNGNKGAGGHSYGIDLKSYDLGVELGTDPIEDYEQNWNTKHGGGVLRELIRELNGGAFTRYVDNNFCGPDGYPLECIKDLLARAGKSMCTLSEQLDYIESKRGVYCCREHEHEIVWFTERSEKSYERQTPFEIKSAKKFDTFKGECPKFVFPLNSKVKVIQPRVEKKKTEGFMGRIRSVYPVATPQECNDMHLSTLMKCNHCDEVSWQTCDFLKATCEQCGTENLVCEGPTTCGYLPANAVVKMPCPACQDPEVGPEHSVADYHNHSNIETRLRKGGRTKCFGGCVFAYVGCYNKRAYWVPRASANIGASHTGITGDNVETLNEDLMEILNRDRVNINIVGDFHLNEEVAIILASFSASTCAFVDTVKGLDYKTFKDIVESCGNFKVTRGRAKKGAWNIGQEKSILTPLYGFPSQAAGVIRSIFTRALDTANHSIPDLQRAAITILDGISEQSLRLIDAMVYTSDLLTNSVIVMAYVTGGLVQQITQWLSNMLGTTVDKLKPVFTWVEAKLSAGIEFLRDAWEILKFLVTGVFDIVKGQIQVASDNLKECVKAFLDVLNKALEMCIDQVIIAGAKLRTLNLGEVFIAQSKGLYRQCIRGKEQLQLLMPLRAPKEVTFFEGDSHDTVFTSEEVVLKNGELEALETPVDSFTNGAVIGTPVCVNGLMLLELKDKEQYCALSPGLLATNNVFSLKGGAPVKGVTFGEDTVLEVQGYKNVKITFELDERVDKVLNEKCSVYTVESGTEVTEFACVVAEAVVKTLQPVSDLLTNMGIDLDEWSVATFYLFDDAGEEKLSSRMYCSFYPPDEEEDCEEYEDEEEIPEETCEHEYGTEDDYKGLPLEFGASTEIQQVDEEEEEDWLEEAIAAKPEPEPLPEEPVNQFTGYLKLTDNVAIKCVDIVKEAQHAKPTVIVNAANVHLKHGGGVAGALNKATNGAMQQESDDYIKKNGPLTVGGSCLLSGHNLAKKCMHVVGPNLNAGEDVQLLKAAYANFNSQDVLLAPLLSAGIFGAKPLQSLKMCVETVRTQVYFAVNDQDLYDHVVLGYLDSLKPKVETPTQENLELKEQPAVETLTQENLELEELPVIEKPVDVKFKARIEEVNTSLEETKFLTSRLLLFADINGKLYQDSQNMLRGEDMFFLEKDAPYIVGDVISSGDITCVIIPAKKAGGTTEMLAKALKKVPVSEYITTYPGQGCAGYTLEEAKTALRKCKSVFYVLPSKTPNDKEEILGTVSWNLREMLAHAEETRKLMLICMDVKALMSTIHRRYKGIKVQEGIVDYGVRFFFYTSKEPVASIITKLNLLNEPLVTMPIGYVTHGLNLEEAARCMRSLKAPAVVSVSSPDAVTTYNGYLTSSSKTSEEHFIETVSLAGMYRDWSYSGQRTELGVEFLKRGDKVVYHTVGSPIQFHLDGEVLLLDKLKSLLSLREVRTIKVFTTVDNTNLHTQIVDMSMTYGQQFGPTYLDGADVTKIKPHAKHEGKTFFVLPSDDTLRSEAFEYYHTLDESFLGRYMSALNHTKKWKFPQIGGLTSIKWADNNCYLSSVLLALQQIEVKFNAPALQEAYYRARAGDAANFCALILAYSNRTVGELGDVRETMTHLLQHANLESAKRVLNVVCKTCGQKSTTLTGVEAVMYMGTLSYEELKTGVTIPCICGRDATQYLVQQESSFVMMSAPPSEYTLQQGAFLCANEYTGSYQCGHYTHVTVKETLYRIDGAYLTKMSEYKGPVTDVFYKEISYTTTIKPVSYKLDGVIYTEIQPKLDEYYKKDNAYYTEQPIDLVPTQPLPNASFDNFKLTCSNTKFADDLNQMTGFKKPASRELSVTFFPDLNGDVVAIDYRHYSASFKKGAKLLHKPIIWHINQTTNKTTYKPNTWCLRCLWSTKPVETSNSFEVLEVEDTQGMDNLACESQTPTSEEVVENPTIQKEVIECDVKTIEVVGNVILKPSEEGVKVTQELGHEDLMAAYVEETSITIKKPNELSLALGLRTLATHGAAAINSVPWSKILAYVKPFLGQAAVTTTNCIKRCVQRVFNNYMPYVITLLFQLCTFTRSTNSRIRASLPTTIAKNSVKSVAKLCLDVCINYVKSPKFSKLFTIAMWLLLLSICLGSLIYVTAAFGVLLSNLGIPSYCDGVRESYVNSSNVTTMDFCEGSFLCSVCLNGLDSLDSYPALETIQVTISSYKLDLTSLGLAAEWFLAYMLFTKFFYLLGLSAIMQVFFGYFASHFISNSWLMWFIISIVQMAPVSAMVRMYIFFAFCYYVWKSYVHIMDGCTSSTCMMCYKRNRATRVECTTIVNGMKRSFYVYANGGRGFCKAHNWNCLNCDTFCAGSTFISDEVARDLSLQFKRPINPTDQSSYVVDSVAVKNGALHLYFDKAGQKTYERHPLSHFVNLDNLRANNTKGSLPINVIVFDGKSKCDESAAKSASVYYSQLMCQPILLLDQALVSDVGDSTEVSVKMFDAYVDTFSATFSVPMEKLKALVATAHSELAKGVALDGVLSTFVSAARQGVVDTDVDTKDVIECLKLSHHSDLEVTGDSCNNFMLTYNKVENMTPRDLGACIDCNARHINAQVAKSHNVSLIWNVKDYMSLSEQLRKQIRSAAKKNNIPFRLTCATTRQVVNAITTKISLKGGKIVSTWFKLMLKATLLCVLAALFCYIIMPVHSLSVHDGYTNEIIGYKAIQDGVTRDIMATDDCFANKHAGFDSWFSQRGGSYRNDKSCPVVAAIITREIGFIVPGLPGTVLRAINGDFLHFLPRVFSAVGNICYTPSKLIEYSDFATSACVLAAECTIFKDAMGKPVPYCYDTNLLEGSISYSELRPDTRYVLMDGSIIQFPNTYLEGSVRVVTTFDAEYCRHGTCERSEAGVCLSTSGRWVLNNEHYRALPGVFCGVDAMNLIANIFTPLVQPVGALDVSASVVAGGIIAILVTCAAYYFMKFRRAFGEYNHVVAANALLFLMSFTILCLAPAYSFLPGVYSIFYLYLTFYFTNDVSFLAHLQWFAMFSPIVPFWITAIYVFCISLKHCHWFFNNYLRKRVMFNGVTFSTFEEAALCTFLLNKEMYLKLRSETLLPLTQYNRYLALYNKYKYFSGALDTTSYREAACCHLAKALNDFSNSGADVLYQPPQTSITSAVLQSGFRKMAFPSGKVEGCMVQVTCGTTTLNGLWLDDTVYCPRHVICTAEDMLNPNYEDLLIRKSNHSFLVQAGNVQLRVIGHSMQNCLLRLKVDTSNPKTPKYKFVRIQPGQTFSVLACYNGSPSGVYQCAMRPNYTIKGSFLNGSCGSVGFNIDYDCVSFCYMHHMELPTGVHAGTDLEGKFYGPFVDRQTAQAAGTDTTITLNVLAWLYAAVINGDRWFLNRFTTTLNDFNLVAMKYNYEPLTQDHVDILGPLSAQTGIAVLDMCAALKELLQNGMNGRTILGSTILEDEFTPFDVVRQCSGVTFQGKFKKIVKGTHHWMLLTFLTSLLILVQSTQWSLFFFVYENAFLPFTLGIMAIAACAMLLVKHKHAFLCLFLLPSLATVAYFNMVYMPASWVMRIMTWLELADTSLSGYRLKDCVMYASALVLLVLMTARTVYDDAARRVWTLMNVITLVYKVYYGNSLDQAISMWALVISVTSNYSGVVTTIMFLARAIVFVCVEYYPLLFITGNTLQCIMLVYCFLGYCCCCYFGLFCLLNRYFRLTLGVYDYLVSTQEFRYMNSQGLLPPKSSIDAFKLNIKLLGIGGKPCIKVATVQSKMSDVKCTSVVLLSVLQQLRVESSSKLWAQCVQLHNDILLAKDTTEAFEKMVSLLSVLLSMQGAVDINKLCEEMLDNRATLQAIASEFSSLPSYAAYATAQEAYEQAVANGDSEVVLKKLKKSLNVAKSEFDRDAAMQRKLEKMADQAMTQMYKQARSEDKRAKVTSAMQTMLFTMLRKLDNDALNNIINNARDGCVPLNIIPLTTAAKLMVVVPDYGTYKNTCDGNTFTYASALWEIQQVVDADSKIVQLSEINMDNSQNLAWPLIVTALRANSAVKLQNNELSPVALRQMSCAAGTTQTACTDDNALAYYNNSKGGRFVLALLSDHQDLKWARFPKSDGTGTIYTELEPPCRFVTDTPRGPKVKYLYFIKGLNNLNRGMVLGSLAATVRLQAGNATEVPANSAVLSFCAFAVDPAKAYKDYLASGGQPITNCVKMLCTHTGTGQAITVTPEANMDQESFGGASCCLYCRCHIDHPNPKGFCDLKGKYVQIPATCANDPVGFTLKNTVCTVCGTWKGYGCSCDQLREPMMQSADASTFLNRVCGVSAARLTPCGTGTSTDVVYRAFDIYNERVAGFAKFLKTNCCRFQEKDEEGNLLDSYFVVKRHTMSNYQHEETIYNLVKECPAVAVHDFFKFRVDGDMVPHISRQRLTKYTMADLVYALRHFDEGNCDTLKEILVTYNCCDDDYFNKKDWYDFVENPDILRVYANLGERVRQALLKTVQFCDAMRDAGIVGVLTLDNQDLNGNWYDFGDFVQVAPGCGVPIVDSYYSLLMPILTLTKALAAESHMDADLAKPLIKWDLLKYDFTEERLCLFDRYFKYWDQTYHPNCINCLDDRCILHCANFNVLFSTVFPPTSFGPLVRKIFVDGVPFVVSTGYHFRELGVVHNQDVNLHSSRLSFKELLVYAADPAMHAASGNLLLDKRTTCFSVAALTNNVAFQTVKPGNFNKDFYDFAVSKGFFKEGSSVELKHFFFAQDGNAAISDYDYYRYNLPTMCDIRQLLFVVEVVDKYFDCYDGGCINANQVIVNNLDKSAGFPFNKWGKARLYYDSMSYEDQDVLFAYTKRNVIPTITQMNLKYAISAKNRARTVAGVSICSTMTNRQFHQKLLKSIAATRGATVVIGTSKFYGGWHNMLKTVYSDVETPHLMGWDYPKCDRAMPNMLRIMASLVLARKHSTCCNLSHRFYRLANECAQVLSEMVMCGGSLYVKPGGTSSGDATTAYANSVFNICQAVTANVNALLSTDGNKIADKYVRNLQHRLYECLYRNRDVDHEFVDEFYAYLRKHFSMMILSDDAVVCYNSNYAAQGLVASIKNFKAVHYYQNNVFMSEAKCWTETDLTKGPHEFCSQHTMLVKQGDDYVYLPYPDPSRILGAGCFVDDIVKTDGTLMIERFVSLAIDAYPLTKHPNQEYADVFHLYLQYIRKLHDELTGHMLDMYSVMLTNDNTSRYWEPEFYEAMYTPHTVLQAVGACVLCNSQTSLRCGACIRRPFLCCKCCYDHVISTSHKLVLSVNPYVCNAPGCDVTDVTQLYLGGMSYYCKLHKPPISFPLCANGQVFGLYKNTCVGSDNVTDFNAIATCDWTNAGDYILANTCTERLKLFAAETLKATEETFKLSYGIATVREVLSDRELHLSWEVGKPRPPLNRNYVFTGYRVTKNSKVQIGEYTFEKGDYGDAVVYRGTTTYKLNVGDYFVLTSHTVMPLSAPTLVPQEHYVRITGLYPTLNISDEFSSNVANYQKVGMQKYSTLQGPPGTGKSHFAIGLALYYPSARIVYTACSHAAVDALCEKALKYLPIDKCSRIIPARARVECFDKFKVNSTLEQYVFCTVNALPETTADIVVFDEISMATNYDLSVVNARLRAKHYVYIGDPAQLPAPRTLLTKGTLEPEYFNSVCRLMKTIGPDMFLGTCRRCPAEIVDTVSALVYDNKLKAHKEKSAQCFKMFYKGVITHDVSSAINRPQIGVVREFLTRNPAWRKAVFISPYNSQNAVASKILGLPTQTVDSSQGSEYDYVIFTQTTETAHSCNVNRFNVAITRAKIGILCIMSDRDLYDKLQFTSLEVPRRNVATLQAENVTGLFKDCSKIITGLHPTQAPTHLSVDTKFKTEGLCVDIPGIPKDMTYRRLISMMGFKMNYQVNGYPNMFITREEAIRHVRAWIGFDVEGCHATRDAVGTNLPLQLGFSTGVNLVAVPTGYVDTENNTEFTRVNAKPPPGDQFKHLIPLMYKGLPWNVVRIKIVQMLSDTLKGLSDRVVFVLWAHGFELTSMKYFVKIGPERTCCLCDRRATCFSTSSDTYACWNHSVGFDYVYNPFMIDVQQWGFTGNLQSNHDQHCQVHGNAHVASCDAIMTRCLAVHECFVKRVDWSVEYPIIGDELKINAACRKVQHMVVKSALLADKFSVLHDIGNPKAIKCVPQAEVDWKFYDAQPCSDKAYKIEELFYSYATHHDKFTDGVCLFWNCNVDRYPANAIVCRFDTRVLSNLNLPGCDGGSLYVNKHAFHTPAFDKSAFTYLKQLPFFYYSDSPCESHGKQVVSDIDYVPLKSATCITRCNLGGAVCRRHANEYRQYLDAYNMMISAGFSLWIYKQFDTYNLWNTFTRLQSLENVAYNVVNKGHFDGQIGEAPVSIINNAVYTKVDGNDVEIFENKTTLPVNVAFELWAKRNIKPVPEIKILNNLGVDIAANTVIWDYKREAPAHVSTIGVCTMTDIAKKPTESACSSLTVLFDGRVEGQVDLFRNARNGVLITEGSVKGLTPSKGPAQASVNGVTLIGESVKTQFNYFKKVDGIIQQLPETYFTQSRDLEDFKPRSKMETDFLELAMDEFIQRYKLEGYAFEHIVYGDFSHGQLGGLHLMIGLAKRSQDSPLKLEDFIPTDSTVKNYFITDAQTGSSKCVCSVIDLLLDDFVEIIKSQDLSVISKVVKVTIDYAEISFMLWCKDGHVETFYPKLQASQAWQPGVAMPNLYKMQRMLLEKCDLQNYGENAVIPKGIMMNVAKYTQLCQYLNTLTLAVPYNMRVIHFGAGSDKGVAPGTAVLRQWLPTGALLVDSDLNDFVSDADSTLIGDCATVHTANKWDLIISDMYDPKTKHVTKENDSKEGFFTYLCGFIKQKLALGGSVAVKITEHSWNADLYKLMGHFSWWTAFVTNVNASSSEAFLIGVNYLGKLREQIDGYTMHANYIFWRNTNPIQLSSYSLFDMSKFPLKLRGTAVMSLKENQINDMIYSLLENGRLIIRENNRVVVSSDILVNN.

Residues 12-127 (THVQLSLPVL…YRNVLLRKNG (116 aa)) enclose the CoV Nsp1 globular domain. Residues 148 to 179 (ELGTDPIEDYEQNWNTKHGGGVLRELIRELNG) enclose the BetaCoV Nsp1 C-terminal domain. Positions 183 to 456 (TRYVDNNFCG…NEDLMEILNR (274 aa)) constitute a CoV Nsp2 N-terminal domain. Zn(2+) is bound by residues C200, C231, H234, H236, C323, C326, C341, C344, C370, C373, H382, and C416. Residues 200–236 (CIKDLLARAGKSMCTLSEQLDYIESKRGVYCCREHEH) form a C2H2 region. The segment at 323–344 (CNHCDEVSWQTCDFLKATCEQC) is C4. Positions 370-416 (CPACQDPEVGPEHSVADYHNHSNIETRLRKGGRTKCFGGCVFAYVGC) are C2HC. Residues 458–688 (RVNINIVGDF…LDVLNKALEM (231 aa)) enclose the CoV Nsp2 middle domain. In terms of domain architecture, CoV Nsp2 C-terminal spans 690–818 (IDQVIIAGAK…TNNVFSLKGG (129 aa)). The Ubiquitin-like 1 domain maps to 822–930 (KGVTFGEDTV…MYCSFYPPDE (109 aa)). Macro domains are found at residues 1001–1167 (VNQF…LGYL), 1213–1341 (KFKA…LPSK), and 1349–1476 (ILGT…TSSS). The DPUP domain occupies 1478–1544 (TSEEHFIETV…LLDKLKSLLS (67 aa)). Residues 1548–1603 (VRTIKVFTTVDNTNLHTQIVDMSMTYGQQFGPTYLDGADVTKIKPHAKHEGKTFFV) form the Ubiquitin-like 2 domain. One can recognise a Peptidase C16 domain in the interval 1617-1881 (YYHTLDESFL…YTEIQPKLDE (265 aa)). C1657 acts as the For PL-PRO activity in catalysis. Residues C1735, C1738, C1770, and C1772 each contribute to the Zn(2+) site. A C4-type zinc finger spans residues 1735 to 1772 (CKTCGQKSTTLTGVEAVMYMGTLSYEELKTGVTIPCIC). Catalysis depends on for PL-PRO activity residues H1818 and D1832. The Nucleic acid-binding domain maps to 1894–2004 (PIDLVPTQPL…CLWSTKPVET (111 aa)). A G2M domain is found at 2029 to 2138 (PTSEEVVENP…LGQAAVTTTN (110 aa)). Positions 2098-2377 (LALGLRTLAT…IFFAFCYYVW (280 aa)) are HD1. A helical membrane pass occupies residues 2209–2229 (LFTIAMWLLLLSICLGSLIYV). Residues 2230–2300 (TAAFGVLLSN…QVTISSYKLD (71 aa)) enclose the 3Ecto domain. 2 disulfides stabilise this stretch: C2246/C2274 and C2265/C2271. Helical transmembrane passes span 2310 to 2330 (WFLAYMLFTKFFYLLGLSAIM) and 2357 to 2377 (MAPVSAMVRMYIFFAFCYYVW). Residues 2378-2468 (KSYVHIMDGC…QFKRPINPTD (91 aa)) form a Y1 region. A CoV Nsp3 Y domain is found at 2378–2746 (KSYVHIMDGC…ITTKISLKGG (369 aa)). Zn(2+)-binding residues include H2382, C2387, C2392, C2395, C2428, H2431, C2435, and C2438. The ZF1 stretch occupies residues 2382–2395 (HIMDGCTSSTCMMC). The tract at residues 2428–2438 (CKAHNWNCLNC) is ZF2. The segment at 2469-2563 (QSSYVVDSVA…LLDQALVSDV (95 aa)) is Y2. Positions 2469–2746 (QSSYVVDSVA…ITTKISLKGG (278 aa)) are coV-Y. A Y3 region spans residues 2564-2645 (GDSTEVSVKM…ECLKLSHHSD (82 aa)). The segment at 2646 to 2746 (LEVTGDSCNN…ITTKISLKGG (101 aa)) is Y4. 7 helical membrane passes run 2761-2781 (LLCVLAALFCYIIMPVHSLSV), 2998-3018 (PGVFCGVDAMNLIANIFTPLV), 3028-3048 (ASVVAGGIIAILVTCAAYYFM), 3060-3080 (VVAANALLFLMSFTILCLAPA), 3083-3103 (FLPGVYSIFYLYLTFYFTNDV), 3111-3131 (WFAMFSPIVPFWITAIYVFCI), and 3148-3168 (VMFNGVTFSTFEEAALCTFLL). The HD2 stretch occupies residues 2761–3168 (LLCVLAALFC…EEAALCTFLL (408 aa)). Residues 3148-3246 (VMFNGVTFST…QTSITSAVLQ (99 aa)) form the Nsp4C domain. One can recognise a Peptidase C30 domain in the interval 3247–3552 (SGFRKMAFPS…VRQCSGVTFQ (306 aa)). Active-site for 3CL-PRO activity residues include H3287 and C3391. Helical transmembrane passes span 3570–3590 (FLTSLLILVQSTQWSLFFFVY), 3592–3612 (NAFLPFTLGIMAIAACAMLLV), 3618–3638 (FLCLFLLPSLATVAYFNMVYM), 3665–3684 (CVMYASALVLLVLMTARTVY), 3691–3710 (VWTLMNVITLVYKVYYGNSL), 3734–3754 (IMFLARAIVFVCVEYYPLLFI), and 3762–3782 (IMLVYCFLGYCCCCYFGLFCL). The tract at residues 3570 to 3782 (FLTSLLILVQ…CCCYFGLFCL (213 aa)) is HD3. The region spanning 3843–3925 (SKMSDVKCTS…EMLDNRATLQ (83 aa)) is the RdRp Nsp7 cofactor domain. A RdRp Nsp8 cofactor domain is found at 3926–4123 (AIASEFSSLP…LRANSAVKLQ (198 aa)). The region spanning 4124–4236 (NNELSPVALR…GSLAATVRLQ (113 aa)) is the Nsp9 ssRNA-binding domain. The region spanning 4237 to 4375 (AGNATEVPAN…CDQLREPMMQ (139 aa)) is the ExoN/MTase coactivator domain. C4310, C4313, H4319, C4326, C4353, C4356, C4364, and C4366 together coordinate Zn(2+). 2 zinc fingers span residues 4310–4326 (CLYCRCHIDHPNPKGFC) and 4353–4366 (CTVCGTWKGYGCSC). The NiRAN domain maps to 4382–4636 (FLNRVCGVSA…AAESHMDADL (255 aa)). N4584 and D4593 together coordinate Mn(2+). The 99-residue stretch at 4641 to 4739 (IKWDLLKYDF…HNQDVNLHSS (99 aa)) folds into the Nsp12 Interface domain. Zn(2+) is bound by residues H4670, C4676, C4681, C4685, and C4862. The 568-residue stretch at 4740–5307 (RLSFKELLVY…AMYTPHTVLQ (568 aa)) folds into the Nsp12 RNA-dependent RNA polymerase domain. A rdRp Fingers N-ter region spans residues 4742 to 4956 (SFKELLVYAA…HQKLLKSIAA (215 aa)). Residues 4957–4995 (TRGATVVIGTSKFYGGWHNMLKTVYSDVETPHLMGWDYP) are rdRp Palm N-ter. The RdRp catalytic domain occupies 4987–5149 (PHLMGWDYPK…CYNSNYAAQG (163 aa)). The interval 4996–5054 (KCDRAMPNMLRIMASLVLARKHSTCCNLSHRFYRLANECAQVLSEMVMCGGSLYVKPGG) is rdRp Fingers C-ter. H5017, C5020, and C5021 together coordinate Zn(2+). Positions 5055 to 5190 (TSSGDATTAY…TKGPHEFCSQ (136 aa)) are rdRp Palm C-ter. Catalysis depends on residues S5134, D5135, and D5136. A rdRp Thumb region spans residues 5191–5307 (HTMLVKQGDD…AMYTPHTVLQ (117 aa)). Positions 5308 to 5420 (AVGACVLCNS…TDFNAIATCD (113 aa)) constitute a CV ZBD domain. Residues C5312, C5315, C5323, C5326, C5333, C5336, H5340, H5346, C5357, C5362, C5379, and H5382 each contribute to the Zn(2+) site. The (+)RNA virus helicase ATP-binding domain occupies 5564-5745 (NISDEFSSNV…MKTIGPDMFL (182 aa)). An ATP-binding site is contributed by 5589–5596 (GPPGTGKS). The 170-residue stretch at 5746–5915 (GTCRRCPAEI…TLQAENVTGL (170 aa)) folds into the (+)RNA virus helicase C-terminal domain. The ExoN domain occupies 5980–6195 (MFITREEAIR…RCLAVHECFV (216 aa)). Catalysis depends on residues D5998, E6000, and E6099. C6115, C6118, C6134, H6137, H6165, C6169, and H6172 together coordinate Zn(2+). Residues H6176 and D6181 contribute to the active site. C6187 contributes to the Zn(2+) binding site. Residues 6204-6435 (YPIIGDELKI…NLWNTFTRLQ (232 aa)) form the N7-MTase domain. 6239–6245 (DIGNPKA) contributes to the S-adenosyl-L-methionine binding site. A gpppA-binding region spans residues 6322–6336 (CDGGSLYVNKHAFHT). Residues C6360, C6381, C6392, and H6395 each coordinate Zn(2+). One can recognise a Nsp15 N-terminal oligomerization domain in the interval 6436–6496 (SLENVAYNVV…NVAFELWAKR (61 aa)). Residues 6497–6622 (NIKPVPEIKI…YFKKVDGIIQ (126 aa)) enclose the AV-Nsp11N/CoV-Nsp15M domain. Residues 6639–6778 (KPRSKMETDF…KDGHVETFYP (140 aa)) form the NendoU domain. Active-site residues include H6669, H6684, K6724, K6827, D6911, K6951, and E6984. Residues 6783-7077 (SQAWQPGVAM…RVVVSSDILV (295 aa)) form the Nidovirus-type SAM-dependent 2'-O-MTase domain.

It belongs to the coronaviruses polyprotein 1ab family. As to quaternary structure, interacts with host PHB and PHB2. In terms of assembly, interacts with papain-like protease nsp3 and non-structural protein 6. Monomer. Homodimer. Only the homodimer shows catalytic activity. As to quaternary structure, interacts with nsp8 and nsp12 to form the replication-transcription complex (RTC): nsp12, nsp7, two subunits of nsp8, and up to two subunits of nsp13. In terms of assembly, interacts with nsp7, nsp13 and nsp12 to form the replication-transcription complex (RTC): nsp12, nsp7, two subunits of nsp8, and up to two subunits of nsp13. Interacts with nsp12. As to quaternary structure, interacts with proofreading exoribonuclease nsp14 and 2'-O-methyltransferase nsp16; these interactions enhance nsp14 and nsp16 enzymatic activities. In terms of assembly, interacts with nsp7 and nsp8 to form the replication-transcription complex (RTC): nsp12, nsp7, two subunits of nsp8, and up to two subunits of nsp13. Interacts with nsp9. Interacts with nsp8 to form the replication-transcription complex (RTC): nsp12, nsp7, two subunits of nsp8, and up to two subunits of nsp13. Requires Mn(2+) as cofactor. Mg(2+) is required as a cofactor. Specific enzymatic cleavages in vivo by its own proteases yield mature proteins. 3CL-PRO and PL-PRO proteinases are autocatalytically processed.

It is found in the host membrane. The protein localises to the host cytoplasm. The protein resides in the host perinuclear region. Its subcellular location is the host endoplasmic reticulum-Golgi intermediate compartment. The enzyme catalyses RNA(n) + a ribonucleoside 5'-triphosphate = RNA(n+1) + diphosphate. The catalysed reaction is ATP + H2O = ADP + phosphate + H(+). It catalyses the reaction Thiol-dependent hydrolysis of ester, thioester, amide, peptide and isopeptide bonds formed by the C-terminal Gly of ubiquitin (a 76-residue protein attached to proteins as an intracellular targeting signal).. It carries out the reaction a 5'-end (N(7)-methyl 5'-triphosphoguanosine)-ribonucleoside in mRNA + S-adenosyl-L-methionine = a 5'-end (N(7)-methyl 5'-triphosphoguanosine)-(2'-O-methyl-ribonucleoside) in mRNA + S-adenosyl-L-homocysteine + H(+). The enzyme catalyses uridylyl-uridylyl-ribonucleotide-RNA = a 3'-end uridylyl-2',3'-cyclophospho-uridine-RNA + a 5'-end dephospho-ribonucleoside-RNA. The catalysed reaction is a 5'-end diphospho-ribonucleoside in mRNA + GTP + H(+) = a 5'-end (5'-triphosphoguanosine)-ribonucleoside in mRNA + diphosphate. It catalyses the reaction a 5'-end (5'-triphosphoguanosine)-ribonucleoside in mRNA + S-adenosyl-L-methionine = a 5'-end (N(7)-methyl 5'-triphosphoguanosine)-ribonucleoside in mRNA + S-adenosyl-L-homocysteine. Functionally, the replicase polyprotein of coronaviruses is a multifunctional protein: it contains the activities necessary for the transcription of negative stranded RNA, leader RNA, subgenomic mRNAs and progeny virion RNA as well as proteinases responsible for the cleavage of the polyprotein into functional products. In terms of biological role, inhibits host translation by interacting with the 40S ribosomal subunit. The nsp1-40S ribosome complex further induces an endonucleolytic cleavage near the 5'UTR of host mRNAs, targeting them for degradation. Viral mRNAs are not susceptible to nsp1-mediated endonucleolytic RNA cleavage thanks to the presence of a 5'-end leader sequence and are therefore protected from degradation. By suppressing host gene expression, nsp1 facilitates efficient viral gene expression in infected cells and evasion from host immune response. May play a role in the modulation of host cell survival signaling pathway by interacting with host PHB and PHB2. Indeed, these two proteins play a role in maintaining the functional integrity of the mitochondria and protecting cells from various stresses. Its function is as follows. Responsible for the cleavages located at the N-terminus of the replicase polyprotein. In addition, PL-PRO possesses a deubiquitinating/deISGylating activity and processes both 'Lys-48'- and 'Lys-63'-linked polyubiquitin chains from cellular substrates. Participates together with nsp4 in the assembly of virally-induced cytoplasmic double-membrane vesicles necessary for viral replication. Antagonizes innate immune induction of type I interferon by blocking the phosphorylation, dimerization and subsequent nuclear translocation of host IRF3. Also prevents host NF-kappa-B signaling. Functionally, participates in the assembly of virally-induced cytoplasmic double-membrane vesicles necessary for viral replication. In terms of biological role, cleaves the C-terminus of replicase polyprotein at 11 sites. Recognizes substrates containing the core sequence [ILMVF]-Q-|-[SGACN]. Also able to bind an ADP-ribose-1''-phosphate (ADRP). Plays a role in the initial induction of autophagosomes from host endoplasmic reticulum. Later, limits the expansion of these phagosomes that are no longer able to deliver viral components to lysosomes. Its function is as follows. Forms a hexadecamer with nsp8 (8 subunits of each) that may participate in viral replication by acting as a primase. Alternatively, may synthesize substantially longer products than oligonucleotide primers. Functionally, forms a hexadecamer with nsp7 (8 subunits of each) that may participate in viral replication by acting as a primase. Alternatively, may synthesize substantially longer products than oligonucleotide primers. In terms of biological role, forms a primer, NSP9-pU, which is utilized by the polymerase for the initiation of RNA chains. Interacts with ribosome signal recognition particle RNA (SRP). Together with NSP8, suppress protein integration into the cell membrane, thereby disrupting host immune defenses. Plays a pivotal role in viral transcription by stimulating both nsp14 3'-5' exoribonuclease and nsp16 2'-O-methyltransferase activities. Therefore plays an essential role in viral mRNAs cap methylation. Its function is as follows. RNA-directed RNA polymerase that catalyzes the transcription of viral genomic and subgenomic RNAs. Acts in complex with nsp7 and nsp8 to transcribe both the minus and positive strands of genomic RNA. The kinase-like NiRAN domain of NSP12 attaches one or more nucleotides to the amino terminus of NSP9, forming a covalent RNA-protein intermediate that serves as transcription/replication primer. Subgenomic RNAs (sgRNAs) are formed by discontinuous transcription: The polymerase has the ability to pause at transcription-regulating sequences (TRS) and jump to the leader TRS, resulting in a major deletion. This creates a series of subgenomic RNAs that are replicated, transcribed and translated. In addition, Nsp12 is a subunit of the viral RNA capping enzyme that catalyzes the RNA guanylyltransferase reaction for genomic and sub-genomic RNAs. Subsequently, the NiRAN domain transfers RNA to GDP, and forms the core cap structure GpppA-RNA. Functionally, multi-functional protein with a zinc-binding domain in N-terminus displaying RNA and DNA duplex-unwinding activities with 5' to 3' polarity. Activity of helicase is dependent on magnesium. In terms of biological role, plays a role in viral RNA synthesis through two distinct activities. The N7-guanine methyltransferase activity plays a role in the formation of the cap structure GpppA-RNA. The proofreading exoribonuclease reduces the sensitivity of the virus to RNA mutagens during replication. This activity acts on both ssRNA and dsRNA in a 3'-5' direction. Plays a role in viral transcription/replication and prevents the simultaneous activation of host cell dsRNA sensors, such as MDA5/IFIH1, OAS, and PKR. Acts by degrading the 5'-polyuridines generated during replication of the poly(A) region of viral genomic and subgenomic RNAs. Catalyzes a two-step reaction in which a 2'3'-cyclic phosphate (2'3'-cP) is first generated by 2'-O transesterification, which is then hydrolyzed to a 3'-phosphate (3'-P). If not degraded, poly(U) RNA would hybridize with poly(A) RNA tails and activate host dsRNA sensors. Its function is as follows. Methyltransferase that mediates mRNA cap 2'-O-ribose methylation to the 5'-cap structure of viral mRNAs. N7-methyl guanosine cap is a prerequisite for binding of nsp16. Therefore plays an essential role in viral mRNAs cap methylation which is essential to evade immune system. The polypeptide is Replicase polyprotein 1ab (rep) (Bat coronavirus 279/2005 (BtCoV)).